The sequence spans 119 residues: Large ribosomal subunit protein bL20c (119 aa).

This sequence belongs to the bacterial ribosomal protein bL20 family.

Its subcellular location is the plastid. The protein localises to the chloroplast. In terms of biological role, binds directly to 23S ribosomal RNA and is necessary for the in vitro assembly process of the 50S ribosomal subunit. It is not involved in the protein synthesizing functions of that subunit. This Oedogonium cardiacum (Filamentous green alga) protein is Large ribosomal subunit protein bL20c.